A 396-amino-acid chain; its full sequence is MAKAKFDRSKPHVNIGTIGHVDHGKTTTTAAITKVLSEKYPEENQAFAFDAIDKAPEEKERGITINIAHVEYSTPKRHYAHVDAPGHADYIKNMITGAAQMDGAILVVAATDGPMPQTREHVLLARQVGVPYILVALNKCDMVDDEDLIELVEMEVRELLAEQDFDEDAPIVHISALKALEGDEKWEQSILDLMDACDESIPDPVRETDKPFLMPIEDIFTITGRGTVVTGRVERGKLNINDDVEILGIKEKSQNTTVTGIEMFRKQLDYAEAGDNCGLLLRGTKREDVERGQIVAKPGAYTPHTEFEGSVYVLSKDEGGRHTPFFDNYRPQFYFRTTDVTGVVKLPEGTEMVMPGDNVDMSVTLIQPVAMDEGLRFAIREGGRTVGAGRVTKINK.

The tr-type G domain occupies 10–205 (KPHVNIGTIG…ACDESIPDPV (196 aa)). Positions 19–26 (GHVDHGKT) are G1. 19-26 (GHVDHGKT) serves as a coordination point for GTP. Thr-26 lines the Mg(2+) pocket. The segment at 62–66 (GITIN) is G2. The tract at residues 83 to 86 (DAPG) is G3. GTP-binding positions include 83–87 (DAPGH) and 138–141 (NKCD). The interval 138–141 (NKCD) is G4. The G5 stretch occupies residues 175 to 177 (SAL).

Belongs to the TRAFAC class translation factor GTPase superfamily. Classic translation factor GTPase family. EF-Tu/EF-1A subfamily. Monomer.

The protein localises to the cytoplasm. It catalyses the reaction GTP + H2O = GDP + phosphate + H(+). GTP hydrolase that promotes the GTP-dependent binding of aminoacyl-tRNA to the A-site of ribosomes during protein biosynthesis. The sequence is that of Elongation factor Tu from Corynebacterium kroppenstedtii (strain DSM 44385 / JCM 11950 / CIP 105744 / CCUG 35717).